Reading from the N-terminus, the 959-residue chain is Xylosyltransferase 1 (959 aa).

Over 1-17 (MVAAPCARRLARRSHSA) the chain is Cytoplasmic. A helical; Signal-anchor for type II membrane protein transmembrane segment spans residues 18 to 38 (LLAALTVLLLQTLVVWNFSSL). At 39–959 (DSGAGERRGG…GAVKPDGRLR (921 aa)) the chain is on the lumenal side. A disordered region spans residues 42-259 (AGERRGGAAV…KYDQPPKCDI (218 aa)). Gly residues predominate over residues 78–104 (RGGGGGGGGGGGGRGPQARARGGGPGE). The segment covering 145 to 161 (KVRTDSNNENSVPKDFE) has biased composition (basic and acidic residues). A compositionally biased stretch (polar residues) spans 163 to 172 (VDNSNFAPRT). Residues 177–204 (HQPELAKKPPSRQKELLKRKLEQQEKGK) are compositionally biased toward basic and acidic residues. Residue Asn-226 is glycosylated (N-linked (GlcNAc...) asparagine). Over residues 249–259 (TKYDQPPKCDI) the composition is skewed to basic and acidic residues. Cystine bridges form between Cys-257-Cys-285, Cys-301-Cys-542, Cys-561-Cys-574, and Cys-563-Cys-572. UDP-alpha-D-xylose contacts are provided by residues Val-333, Asp-361, and 390 to 392 (TIW). Residue Asn-421 is glycosylated (N-linked (GlcNAc...) asparagine). 494–495 (DW) serves as a coordination point for UDP-alpha-D-xylose. UDP-alpha-D-xylose-binding positions include Ser-575 and 598 to 599 (RK). 2 disulfides stabilise this stretch: Cys-675-Cys-927 and Cys-920-Cys-933. A glycan (N-linked (GlcNAc...) asparagine) is linked at Asn-777. The tract at residues 940 to 959 (SFSPDPKSELGAVKPDGRLR) is disordered.

This sequence belongs to the glycosyltransferase 14 family. XylT subfamily. In terms of assembly, monomer. Requires a divalent metal cation as cofactor. In terms of processing, contains 7 disulfide bonds. N-glycosylated. As to expression, widely expressed. Expressed at higher level in placenta, kidney and pancreas. Weakly expressed in skeletal muscle.

It is found in the golgi apparatus membrane. The protein localises to the secreted. The enzyme catalyses UDP-alpha-D-xylose + L-seryl-[protein] = 3-O-(beta-D-xylosyl)-L-seryl-[protein] + UDP + H(+). It functions in the pathway glycan metabolism; chondroitin sulfate biosynthesis. Its pathway is glycan metabolism; heparan sulfate biosynthesis. Its function is as follows. Catalyzes the first step in the biosynthesis of chondroitin sulfate and dermatan sulfate proteoglycans, such as DCN. Transfers D-xylose from UDP-D-xylose to specific serine residues of the core protein. Required for normal embryonic and postnatal skeleton development, especially of the long bones. Required for normal maturation of chondrocytes during bone development, and normal onset of ossification. The sequence is that of Xylosyltransferase 1 (XYLT1) from Homo sapiens (Human).